The following is an 878-amino-acid chain: MTYHNDSTDLETLEIQELETEMDDSMHEEDIEFNEFVDNTSEFEEAESNQQNEAIDGEHIANDQSDMDSTMTQLVTANSSKPDSLYLLPVKERPFFPGQTLPIILDKNSWSKTIKKVIDEKIHYIGIIYVEADDHHKAKPKDFAKTGTLIRIHEPKIKEDYIQLIAEGVCRFQIADWLSSSAPFRARVNYPNDIRNGSPKEFKAYGLAIMNAFKELLPLNPLYSEELKYFLNRYSASDSQHLADFAASLTAASNEKLQDLLDTLDLSERLEKVLSLFKHEIEVTKLQFNIRERVEENLSQQQREFFLHQQLKEIQKELGMVKDDRTADADLFQERLDKLELSEEATKKAEEELGKINMLDPQSPEYGVARNWLDWLTQLPWGKYSDDKLDLGRARKILNKGHDGLDDVKDRILEFLAVGALKGEISGSIICLVGPPGVGKTSIGRSIADTLGRKFYRFSVGGMRDEAEIKGHRRTYIGAMPGKFVQALKDCETANPVIMLDEIDKIGSSYQGDPASALLEVLDPEQNSEFMDHYMDVRFDLSKTLFVCTANTLDSIPGPLLDRMEVIRLSGYITEEKIQIAKHHLWPSLLEDAGLNKKQIQITPATIRHVIEGYAREAGVRNLKKQLAKLIRKLAIKFVNGDMEQTTLHVNDLEEMLGQPRFTPEKTNQQMGTVTGLAWTSMGGATLTIEASRVHTLNRGFKLSGQLGDVMQESASIAYSYIASNLDKYKADPEFFDKAFVHLHVPDGATPKDGPSAGVTMATALLSLARNEAIKKPLAMTGELSLTGQVLPVGGIREKVIAARRVGIKELILPDENRKDYDELPDYLKEGMTLHFAKHFDDVAKLTFHIRSKSSALKKYLSKAVISTEEKTEQETTS.

A Lon N-terminal domain is found at 85–281 (LYLLPVKERP…KVLSLFKHEI (197 aa)). Residue 434-441 (GPPGVGKT) coordinates ATP. The region spanning 668–850 (NQQMGTVTGL…DDVAKLTFHI (183 aa)) is the Lon proteolytic domain. Active-site residues include Ser-756 and Lys-799.

Belongs to the peptidase S16 family. As to quaternary structure, homohexamer. Organized in a ring with a central cavity.

The protein resides in the cytoplasm. The catalysed reaction is Hydrolysis of proteins in presence of ATP.. In terms of biological role, ATP-dependent serine protease that mediates the selective degradation of mutant and abnormal proteins as well as certain short-lived regulatory proteins. Required for cellular homeostasis and for survival from DNA damage and developmental changes induced by stress. Degrades polypeptides processively to yield small peptide fragments that are 5 to 10 amino acids long. Binds to DNA in a double-stranded, site-specific manner. The polypeptide is Lon protease 2 (Hydrogenovibrio crunogenus (strain DSM 25203 / XCL-2) (Thiomicrospira crunogena)).